A 360-amino-acid chain; its full sequence is Methyltransferase pvhD (360 aa).

S-adenosyl-L-methionine is bound by residues 201–202, aspartate 227, 251–252, arginine 267, and arginine 268; these read SG and DL.

The protein belongs to the class I-like SAM-binding methyltransferase superfamily. Cation-independent O-methyltransferase family.

Its pathway is secondary metabolite biosynthesis. Its function is as follows. Methyltransferase; part of the gene cluster that mediates the biosynthesis of varicidin A, an antifungal natural product containing a cis-octahydrodecalin core. The PKS module of pvhA together with the enoylreductase pvhC catalyze the formation of the polyketide unit which is then conjugated to L-isoleucine by the condensation domain of the NRPS module. Activity of the Dieckmann cyclase domain (RED) of pvhA results in release of an acyclic tetramate. The cytochrome P450 monooxygenase pvhE then catalyzes the oxidation of the C21 methyl group to a to carboxylate group. The methyltransferase pvhD then further methylates the pvhE product. The Diels-Alderase pvhB is able to catalyze Diels-Alder cycloaddition using both pvhE and pvhD products as substrates to form the decalin ring, yielding varicidin B and A, respectively. This Talaromyces variabilis (Penicillium variabile) protein is Methyltransferase pvhD.